Consider the following 224-residue polypeptide: MNPPILERDPSDPQKEKKEGVNPVLKLVLELGPLLVFFFANARGEWLVQKFPVLGEFGGPIFVATGLFMAATAIALIASWLLTRTLPIMPMVSGVVVFIFGALTLYLQDDIFIKMKPTIVNTLFGGVLLGGLYFGRSLLGYVFDSAFRLDAEGWRKLTFRWGLFFLFLAVVNEVVWRNFSTDAWVTFKVWGIMPITLLFTFSQMPLILRHSLDDKASGEEKAGK.

A run of 6 helical transmembrane segments spans residues 20 to 40 (GVNPVLKLVLELGPLLVFFFA), 61 to 81 (IFVATGLFMAATAIALIASWL), 86 to 106 (LPIMPMVSGVVVFIFGALTLY), 123 to 143 (LFGGVLLGGLYFGRSLLGYVF), 156 to 176 (KLTFRWGLFFLFLAVVNEVVW), and 187 to 207 (FKVWGIMPITLLFTFSQMPLI).

This sequence belongs to the YciB family.

Its subcellular location is the cell inner membrane. Functionally, plays a role in cell envelope biogenesis, maintenance of cell envelope integrity and membrane homeostasis. The protein is Inner membrane-spanning protein YciB of Mesorhizobium japonicum (strain LMG 29417 / CECT 9101 / MAFF 303099) (Mesorhizobium loti (strain MAFF 303099)).